Consider the following 217-residue polypeptide: Dihydroflavonol 4-reductase (217 aa).

Residues K27 and Y146 each contribute to the NADP(+) site.

Belongs to the NAD(P)-dependent epimerase/dehydratase family. Dihydroflavonol-4-reductase subfamily.

The catalysed reaction is a (2R,3S,4S)-leucoanthocyanidin + NADP(+) = a (2R,3R)-dihydroflavonol + NADPH + H(+). It catalyses the reaction (2S)-flavan-4-ol + NADP(+) = (2S)-flavanone + NADPH + H(+). It functions in the pathway pigment biosynthesis; anthocyanin biosynthesis. Functionally, bifunctional enzyme involved in flavonoid metabolism. This is Dihydroflavonol 4-reductase (DFR1) from Medicago sativa (Alfalfa).